Here is a 196-residue protein sequence, read N- to C-terminus: Phosphoheptose isomerase (196 aa).

The region spanning 36–196 (MAQALQAEGK…LIDQHLFGGA (161 aa)) is the SIS domain. 51–53 (NGG) contacts substrate. The Zn(2+) site is built by His60 and Glu64. Residues Glu64, 93-94 (ND), 119-121 (STS), Ser124, and Gln174 each bind substrate. Positions 174 and 182 each coordinate Zn(2+).

It belongs to the SIS family. GmhA subfamily. As to quaternary structure, homotetramer. Zn(2+) is required as a cofactor.

The protein resides in the cytoplasm. The catalysed reaction is 2 D-sedoheptulose 7-phosphate = D-glycero-alpha-D-manno-heptose 7-phosphate + D-glycero-beta-D-manno-heptose 7-phosphate. It participates in carbohydrate biosynthesis; D-glycero-D-manno-heptose 7-phosphate biosynthesis; D-glycero-alpha-D-manno-heptose 7-phosphate and D-glycero-beta-D-manno-heptose 7-phosphate from sedoheptulose 7-phosphate: step 1/1. Catalyzes the isomerization of sedoheptulose 7-phosphate in D-glycero-D-manno-heptose 7-phosphate. In Alkalilimnicola ehrlichii (strain ATCC BAA-1101 / DSM 17681 / MLHE-1), this protein is Phosphoheptose isomerase.